The following is a 1158-amino-acid chain: MTDVSAPTGGATSPVDITASPGSTALPPVATTSAAASASSSQAKPLTNGAKKAATAAAAAGAEEGGASASNQVKQEQRRQSNNNRPAASGTPEAKQATPAGNPDPGAGSTSKSSSIHTQTSQQERAGRPTSSASQHDVDEVARLFEEKPEAFEKWLTERAPPEALGRLQEFIESRKPLKRPSVTSDLFQQWMAASPTVQQKSPRSLSNSSASSIPESRRHLMDLDEGELFMELIRDVANELDIDVLCHKILVNVGLLTHADRGSLFLAKGAPNNKYLVAKLFDVTQKTALKDAVTRASTEEIIIPFGIGIAGMVAQTKQMINIKEAYKDARFNCEIDLKTGYKTNAILCMPICNYEGDIIGVAQIINKTNGCMEFDEHDVEIFRRYLTFCGIGIQNAQLFEMSVQEYRRNQILLNLARSIFEEQNNLECLVTKIMTEARELLKCERCSVFLVDLDCCEAGCGRVGGAMRRFGVRSKQVSAIVEHVGGRRGNTSHLEKIIEKPNQPATRAIKSADSFEEKKMRNRFTVLFELGGEYQAANVSRPSTSELSTSTLAQIAQFVATTGQTVNICDVHEWVREHNQIRAESEIDSTQAILCMPIVNAKKTVIGVAQLINKANGVPFTESDASIFEAFAIFCGLGIHNTQMYENACKLMAKQKVALECLSYHATASQDQTEKLTQDAIADADTYNLYSFTFTDFELVDDDTCRAVLRMFMQCNLVSQFQIPYDVLCRWVLSVRKNYRPVKYHNWRHALNVAQTMFAMLKTGKMERFMTDLEILGLLVACLCHDLDHRGTNNAFQTKTESPLAILYTTSTMEHHHFDQCVMILNSEGNNIFQALSPEDYRSVMKTVESAILSTDLAMYFKKRNAFLELVENGEFDWQGEEKKDLLCGMMMTACDVSAIAKPWEVQHKVAKLVADEFFDQGDLEKLQLNTQPVAMMDRERKDELPKMQVGFIDVICLPLYRVLCDTFPWITPLYEGTLENRRNWQDLAEKVEMGLTWIDHDTIDKPVEEFAACADEEIKDIEFTVTTLNCNQSQQSQHGSEDSHTPEHQRSGSRLSMKKTGALGKAVRSKLSKTLYNSMDGSKPKTSLKLLESHVSEDMDDKSPTSPSQPQAAGSMGRMSASSSTSSAGGQGQCQVAAPGQAQDKSKKRSKLCALL.

Disordered regions lie at residues 1 to 137 (MTDV…SQHD) and 195 to 216 (SPTV…SIPE). Over residues 30–71 (ATTSAAASASSSQAKPLTNGAKKAATAAAAAGAEEGGASASN) the composition is skewed to low complexity. A compositionally biased stretch (polar residues) spans 108–135 (GSTSKSSSIHTQTSQQERAGRPTSSASQ). The span at 202–215 (SPRSLSNSSASSIP) shows a compositional bias: low complexity. GAF domains follow at residues 242-394 (DIDV…GIGI) and 426-640 (NLEC…GLGI). Positions 670–993 (SQDQTEKLTQ…RNWQDLAEKV (324 aa)) constitute a PDEase domain. The active-site Proton donor is the H746. A divalent metal cation contacts are provided by H750, H786, D787, and D897. Disordered stretches follow at residues 1034–1065 (QSQQ…TGAL) and 1097–1158 (VSED…CALL). The segment covering 1041-1052 (GSEDSHTPEHQR) has biased composition (basic and acidic residues). Residues 1114 to 1130 (AAGSMGRMSASSSTSSA) are compositionally biased toward low complexity. Positions 1148–1158 (SKKRSKLCALL) are enriched in basic residues. Position 1155 is a cysteine methyl ester (C1155). C1155 is lipidated: S-farnesyl cysteine. A propeptide spans 1156 to 1158 (ALL) (removed in mature form).

The protein belongs to the cyclic nucleotide phosphodiesterase family. In terms of assembly, interacts with PrBP. A divalent metal cation is required as a cofactor.

The protein resides in the cell membrane. The catalysed reaction is 3',5'-cyclic GMP + H2O = GMP + H(+). Functionally, has a role regulating cGMP transport in Malpighian tubule principal cells. The chain is cGMP-specific 3',5'-cyclic phosphodiesterase from Drosophila ananassae (Fruit fly).